A 58-amino-acid chain; its full sequence is uncharacterized protein (58 aa).

The helical transmembrane segment at 5-27 (FLHANITIIPHSVLYVSLSYYII) threads the bilayer.

It is found in the membrane. This is an uncharacterized protein from Saccharomyces cerevisiae (strain ATCC 204508 / S288c) (Baker's yeast).